A 361-amino-acid chain; its full sequence is 3-dehydroquinate synthase (361 aa).

NAD(+) contacts are provided by residues 73–78 (DAEAGK), 107–111 (GAATD), 131–132 (TT), K144, K153, and 171–174 (TLET). Residues E186, H249, and H265 each coordinate Zn(2+).

Belongs to the sugar phosphate cyclases superfamily. Dehydroquinate synthase family. NAD(+) serves as cofactor. Co(2+) is required as a cofactor. It depends on Zn(2+) as a cofactor.

It localises to the cytoplasm. It catalyses the reaction 7-phospho-2-dehydro-3-deoxy-D-arabino-heptonate = 3-dehydroquinate + phosphate. The protein operates within metabolic intermediate biosynthesis; chorismate biosynthesis; chorismate from D-erythrose 4-phosphate and phosphoenolpyruvate: step 2/7. Catalyzes the conversion of 3-deoxy-D-arabino-heptulosonate 7-phosphate (DAHP) to dehydroquinate (DHQ). The sequence is that of 3-dehydroquinate synthase from Mycobacterium leprae (strain TN).